Consider the following 85-residue polypeptide: U4-theraphotoxin-Hhn1f (85 aa).

Residues 1–22 (MKVTLIAILTCAAVLVLHTTAA) form the signal peptide. A propeptide spanning residues 23–48 (EELEAESQLMEVGMPDTELAAVDEER) is cleaved from the precursor. Residues C71 and C82 are joined by a disulfide bond.

It belongs to the neurotoxin 12 (Hwtx-2) family. 02 (Hwtx-2) subfamily. Expressed by the venom gland.

Its subcellular location is the secreted. In terms of biological role, postsynaptic neurotoxin. This Cyriopagopus hainanus (Chinese bird spider) protein is U4-theraphotoxin-Hhn1f.